Consider the following 388-residue polypeptide: Xylose isomerase (388 aa).

Active-site residues include His-54 and Asp-57. Residues Glu-181, Glu-217, His-220, Asp-245, Asp-255, Asp-257, and Asp-287 each contribute to the Mg(2+) site.

The protein belongs to the xylose isomerase family. As to quaternary structure, homotetramer. The cofactor is Mg(2+).

It is found in the cytoplasm. It carries out the reaction alpha-D-xylose = alpha-D-xylulofuranose. This Streptomyces corchorusii (Streptomyces chibaensis) protein is Xylose isomerase.